Reading from the N-terminus, the 185-residue chain is Homeobox protein TGIF2LY (185 aa).

Disordered stretches follow at residues 1–58 (MEAA…GNLP) and 166–185 (RCQE…SSPE). Residues 21–39 (AKTQSPAQDTSIMSRNNAD) show a composition bias toward polar residues. The homeobox; TALE-type DNA-binding region spans 48–111 (EHKKKRKGNL…INARRRILPD (64 aa)).

Belongs to the TALE/TGIF homeobox family. Specifically expressed in adult testis.

Its subcellular location is the nucleus. May have a transcription role in testis. May act as a competitor/regulator of TGIF2LX. The sequence is that of Homeobox protein TGIF2LY (TGIF2LY) from Homo sapiens (Human).